Reading from the N-terminus, the 333-residue chain is (2R)-3-sulfolactate dehydrogenase (NADP(+)) (333 aa).

It belongs to the LDH2/MDH2 oxidoreductase family.

It catalyses the reaction (2R)-3-sulfolactate + NADP(+) = 3-sulfopyruvate + NADPH + H(+). In terms of biological role, catalyzes the reduction of sulfopyruvate to (R)-sulfolactate. Together with SlcC, provides a racemase system that converts (2S)-3-sulfolactate to (2R)-3-sulfolactate, which is degraded further by (2R)-sulfolactate sulfo-lyase. The sequence is that of (2R)-3-sulfolactate dehydrogenase (NADP(+)) (comC) from Chromohalobacter salexigens (strain ATCC BAA-138 / DSM 3043 / CIP 106854 / NCIMB 13768 / 1H11).